The primary structure comprises 189 residues: Testis-expressed protein 22 (189 aa).

Residues 1 to 120 (MDSRQQRPQR…TQSVPTPPLQ (120 aa)) form a disordered region. Low complexity predominate over residues 14-24 (QWQLAQEQRQQ). A compositionally biased stretch (basic and acidic residues) spans 70-87 (IDERRRLALQRMQERTDT). Low complexity predominate over residues 103 to 114 (QQTETSPSTQSV).

As to expression, mainly expressed in spermatocytes and spermatids in testis.

It is found in the cytoplasm. Its subcellular location is the cytoplasmic vesicle. The protein localises to the secretory vesicle. The protein resides in the acrosome. This chain is Testis-expressed protein 22 (Tex22), found in Mus musculus (Mouse).